A 269-amino-acid chain; its full sequence is Meiotically up-regulated gene 43 protein (269 aa).

Its subcellular location is the mitochondrion. Its function is as follows. Has a role in meiosis. In Schizosaccharomyces pombe (strain 972 / ATCC 24843) (Fission yeast), this protein is Meiotically up-regulated gene 43 protein (mug43).